The following is a 307-amino-acid chain: tRNA pseudouridine synthase B (307 aa).

Catalysis depends on aspartate 38, which acts as the Nucleophile.

This sequence belongs to the pseudouridine synthase TruB family. Type 1 subfamily.

The catalysed reaction is uridine(55) in tRNA = pseudouridine(55) in tRNA. Responsible for synthesis of pseudouridine from uracil-55 in the psi GC loop of transfer RNAs. This chain is tRNA pseudouridine synthase B, found in Bacillus cereus (strain ZK / E33L).